A 417-amino-acid polypeptide reads, in one-letter code: Putative nickel insertion protein (417 aa).

Residues 69–99 are disordered; that stretch reads HEHHHDHGHHHHGHGHHHDHTHDHHHHHEHR. The span at 74–99 shows a compositional bias: basic residues; sequence DHGHHHHGHGHHHDHTHDHHHHHEHR.

It belongs to the LarC family.

This is Putative nickel insertion protein from Maridesulfovibrio salexigens (strain ATCC 14822 / DSM 2638 / NCIMB 8403 / VKM B-1763) (Desulfovibrio salexigens).